The primary structure comprises 436 residues: MTEATYYFIGIKGSGMSALALVLHDLGHQVLGSDITQYTFTQKGLAAAGIKMLPFDPANLKPGYTVIAGNSFTDDHPEIKRAKELGLTIYRYHEFLGKLIEGYTSIGVAGAHGKTSTTGLLAHTLSGVAKTSYLIGDGTGKGIPDSQFFVFEADEYRRHFLAYHPDYMIMTNIDFDHPDYYTGFEDVYDAFETEANQVKKAIVAWGDDPWLRKLKAKVPVYYYGISDRDDFRARNVDRDTKGSSFDAYFHDQLIGHFFVPLFGEHSVLNALAVVAVAHMEKLDAKLIARELGNFSGVKRRFAEKDLKDMIIVDDYAHHPNEIKATLDAARQKYPDKAIIAVFQPHTFSRTQAYEPQYVQVLSQADQTFLTPIFSSAREKTGKIRSEDITAQIKGAAVIHQEDMKPLLQYHNAVVVFMGAGDIQKYEKAYETLLAEE.

Residue 110 to 116 participates in ATP binding; that stretch reads GAHGKTS.

Belongs to the MurCDEF family.

It is found in the cytoplasm. The enzyme catalyses UDP-N-acetyl-alpha-D-muramate + L-alanine + ATP = UDP-N-acetyl-alpha-D-muramoyl-L-alanine + ADP + phosphate + H(+). Its pathway is cell wall biogenesis; peptidoglycan biosynthesis. Cell wall formation. The chain is UDP-N-acetylmuramate--L-alanine ligase from Lacticaseibacillus casei (strain BL23) (Lactobacillus casei).